The sequence spans 437 residues: Pyrophosphate--fructose 6-phosphate 1-phosphotransferase (437 aa).

G27 is a binding site for diphosphate. D122 is a binding site for Mg(2+). Residues 147–149, 193–195, E261, and 323–326 each bind substrate; these read TID, MGR, and YELR. D149 acts as the Proton acceptor in catalysis.

Belongs to the phosphofructokinase type A (PFKA) family. PPi-dependent PFK group II subfamily. Clade 'Short' sub-subfamily. In terms of assembly, homotetramer. Mg(2+) serves as cofactor. Requires Mn(2+) as cofactor.

It is found in the cytoplasm. The enzyme catalyses beta-D-fructose 6-phosphate + diphosphate = beta-D-fructose 1,6-bisphosphate + phosphate + H(+). The protein operates within carbohydrate degradation; glycolysis; D-glyceraldehyde 3-phosphate and glycerone phosphate from D-glucose: step 3/4. Its activity is regulated as follows. Activated by AMP. Probably promotes oligomerization of the enzyme. Functionally, catalyzes the phosphorylation of D-fructose 6-phosphate, the first committing step of glycolysis. Uses inorganic phosphate (PPi) as phosphoryl donor instead of ATP like common ATP-dependent phosphofructokinases (ATP-PFKs), which renders the reaction reversible, and can thus function both in glycolysis and gluconeogenesis. Consistently, PPi-PFK can replace the enzymes of both the forward (ATP-PFK) and reverse (fructose-bisphosphatase (FBPase)) reactions. The protein is Pyrophosphate--fructose 6-phosphate 1-phosphotransferase of Naegleria fowleri (Brain eating amoeba).